Reading from the N-terminus, the 141-residue chain is ATP synthase epsilon chain (141 aa).

This sequence belongs to the ATPase epsilon chain family. In terms of assembly, F-type ATPases have 2 components, CF(1) - the catalytic core - and CF(0) - the membrane proton channel. CF(1) has five subunits: alpha(3), beta(3), gamma(1), delta(1), epsilon(1). CF(0) has three main subunits: a, b and c.

It is found in the cell membrane. Its function is as follows. Produces ATP from ADP in the presence of a proton gradient across the membrane. The protein is ATP synthase epsilon chain (atpC) of Mycoplasmopsis pulmonis (strain UAB CTIP) (Mycoplasma pulmonis).